Reading from the N-terminus, the 278-residue chain is tRNA (guanine-N(7)-)-methyltransferase (278 aa).

Residues Gly95, Glu118 to Ile119, Asn153 to Ala154, and Cys173 contribute to the S-adenosyl-L-methionine site. Asp176 is a catalytic residue. Thr251 to Glu253 provides a ligand contact to S-adenosyl-L-methionine.

Belongs to the class I-like SAM-binding methyltransferase superfamily. TrmB family. In terms of assembly, forms a complex with TRM82.

The protein localises to the nucleus. It carries out the reaction guanosine(46) in tRNA + S-adenosyl-L-methionine = N(7)-methylguanosine(46) in tRNA + S-adenosyl-L-homocysteine. Its pathway is tRNA modification; N(7)-methylguanine-tRNA biosynthesis. Its function is as follows. Catalyzes the formation of N(7)-methylguanine at position 46 (m7G46) in tRNA. This is tRNA (guanine-N(7)-)-methyltransferase from Kluyveromyces lactis (strain ATCC 8585 / CBS 2359 / DSM 70799 / NBRC 1267 / NRRL Y-1140 / WM37) (Yeast).